Here is a 409-residue protein sequence, read N- to C-terminus: Argininosuccinate synthase (409 aa).

ATP-binding positions include 10–18 (AYSGGLDTS) and Ala-37. The L-citrulline site is built by Tyr-90 and Ser-95. Gly-120 contacts ATP. L-aspartate-binding residues include Thr-122, Asn-126, and Asp-127. Residue Asn-126 coordinates L-citrulline. Residues Arg-130, Ser-182, Ser-191, Glu-267, and Tyr-279 each coordinate L-citrulline.

Belongs to the argininosuccinate synthase family. Type 1 subfamily. As to quaternary structure, homotetramer.

The protein resides in the cytoplasm. The enzyme catalyses L-citrulline + L-aspartate + ATP = 2-(N(omega)-L-arginino)succinate + AMP + diphosphate + H(+). It functions in the pathway amino-acid biosynthesis; L-arginine biosynthesis; L-arginine from L-ornithine and carbamoyl phosphate: step 2/3. In Thiobacillus denitrificans (strain ATCC 25259 / T1), this protein is Argininosuccinate synthase.